Reading from the N-terminus, the 399-residue chain is Protein phosphatase 2C 37 (399 aa).

In terms of domain architecture, PPM-type phosphatase spans 104-389 (KIGTTSVCGR…DNVSVVVVDL (286 aa)). Positions 142 and 143 each coordinate Mn(2+). Residues Cys146, His148, Cys208, and Cys210 each coordinate Zn(2+). Mn(2+) contacts are provided by Asp327, Asp331, and Asp380.

This sequence belongs to the PP2C family. As to quaternary structure, interacts with AKT2/AKT3. Interacts with ABA-bounded PYR1, PYL1, PYL2, PYL3, PYL4, PYL9 and PYL12, and with free PYL2, PYL3, PYL4 and PYL13. Binds to and inactivates SLAC1 and SRK2E. The inactivation of SRK2E does not require phosphatase activity. Interacts with CBL1, CBL2, CBL3, CBL5, and CBL7, but not CBL4, CBL6, and CBL9. Interacts with RGLG1 and RGLG5. Interacts with KIN10. Mg(2+) serves as cofactor. The cofactor is Mn(2+). Ubiquitinated by RGLG1 and RGLG5 in response to abscisic acid (ABA). Ubiquitination of PP2CA leads to its degradation by the proteasome. In terms of tissue distribution, mostly expressed in seeds and leaves, and, to a lower extent, in roots, stems, and flowers, particularly in siliques. Essentially found in the phloem.

The enzyme catalyses O-phospho-L-seryl-[protein] + H2O = L-seryl-[protein] + phosphate. It carries out the reaction O-phospho-L-threonyl-[protein] + H2O = L-threonyl-[protein] + phosphate. Its activity is regulated as follows. Repressed by PYR/PYL/RCAR ABA receptors in an ABA-dependent manner. Its function is as follows. Major negative regulator of abscisic acid (ABA) responses during seed germination and cold acclimation. Confers insensitivity to ABA. Modulates negatively the AKT2/3 activity, which mediates K(+) transport and membrane polarization during stress situations, probably by dephosphorylation. Prevents stomata closure by inactivating the S-type anion efflux channel SLAC1 and its activator SRK2E. Represses KIN10 activity by the specific dephosphorylation of its T-loop Thr-198, leading to a poststress inactivation of SnRK1 signaling. This chain is Protein phosphatase 2C 37 (PP2CA), found in Arabidopsis thaliana (Mouse-ear cress).